Here is a 267-residue protein sequence, read N- to C-terminus: Cilia- and flagella-associated protein 300 (267 aa).

Belongs to the CFAP300 family.

Its subcellular location is the cytoplasm. It localises to the cytoskeleton. The protein localises to the cilium axoneme. Its function is as follows. Cilium- and flagellum-specific protein that plays a role in axonemal structure organization and motility. May play a role in outer and inner dynein arm assembly. This is Cilia- and flagella-associated protein 300 from Xenopus tropicalis (Western clawed frog).